We begin with the raw amino-acid sequence, 329 residues long: MASQLTDAFARKFYYLRLSITDVCNFRCTYCLPDGYKPGGVTNNGFLTVDEIRRVTRAFASLGTEKVRLTGGEPSLRRDFTDIIAAVGENDAIRQIAVTTNGYRLARDAANWREAGLTGVNVSVDSLDARQFHAITGQDKFRQVMAGIDAAFDAGFEKVKVNTVLMRDVNHHQLDTFLAWIQPRPIQLRFIELMETGEGSDLFRKHHISGQVLRDELIKRGWIHQLRQRSDGPAQVFCHPDYAGEIGLIMPYEKDFCATCNRLRVSSVGKLHLCLFGDGGVSLRDLLQDDAQQYALEERISDALREKKQTHFLHQSNTGITQNLSYIGG.

The region spanning 8–234 is the Radical SAM core domain; sequence AFARKFYYLR…QLRQRSDGPA (227 aa). Arg-17 contacts GTP. [4Fe-4S] cluster contacts are provided by Cys-24 and Cys-28. Tyr-30 contributes to the S-adenosyl-L-methionine binding site. [4Fe-4S] cluster is bound at residue Cys-31. Arg-68 is a binding site for GTP. Residue Gly-72 participates in S-adenosyl-L-methionine binding. Residue Thr-99 participates in GTP binding. Ser-123 serves as a coordination point for S-adenosyl-L-methionine. Lys-160 lines the GTP pocket. Met-194 provides a ligand contact to S-adenosyl-L-methionine. [4Fe-4S] cluster is bound by residues Cys-257 and Cys-260. Residue 262–264 participates in GTP binding; sequence RLR. Residue Cys-274 participates in [4Fe-4S] cluster binding.

The protein belongs to the radical SAM superfamily. MoaA family. Monomer and homodimer. It depends on [4Fe-4S] cluster as a cofactor.

The enzyme catalyses GTP + AH2 + S-adenosyl-L-methionine = (8S)-3',8-cyclo-7,8-dihydroguanosine 5'-triphosphate + 5'-deoxyadenosine + L-methionine + A + H(+). Its pathway is cofactor biosynthesis; molybdopterin biosynthesis. Its function is as follows. Catalyzes the cyclization of GTP to (8S)-3',8-cyclo-7,8-dihydroguanosine 5'-triphosphate. This is GTP 3',8-cyclase from Salmonella newport (strain SL254).